The chain runs to 317 residues: ADP-L-glycero-D-manno-heptose-6-epimerase (317 aa).

NADP(+) is bound by residues 10 to 11, 31 to 32, lysine 38, lysine 53, 76 to 80, and asparagine 93; these read FI, DD, and QGACS. The Proton acceptor role is filled by tyrosine 140. Lysine 144 serves as a coordination point for NADP(+). Asparagine 169 is a binding site for substrate. Positions 170 and 178 each coordinate NADP(+). The active-site Proton acceptor is the lysine 178. Residues alanine 180, histidine 187, 201–204, arginine 214, and tyrosine 278 contribute to the substrate site; that span reads FEGC.

This sequence belongs to the NAD(P)-dependent epimerase/dehydratase family. HldD subfamily. As to quaternary structure, homopentamer. It depends on NADP(+) as a cofactor.

It catalyses the reaction ADP-D-glycero-beta-D-manno-heptose = ADP-L-glycero-beta-D-manno-heptose. The protein operates within nucleotide-sugar biosynthesis; ADP-L-glycero-beta-D-manno-heptose biosynthesis; ADP-L-glycero-beta-D-manno-heptose from D-glycero-beta-D-manno-heptose 7-phosphate: step 4/4. In terms of biological role, catalyzes the interconversion between ADP-D-glycero-beta-D-manno-heptose and ADP-L-glycero-beta-D-manno-heptose via an epimerization at carbon 6 of the heptose. The polypeptide is ADP-L-glycero-D-manno-heptose-6-epimerase (Nitrosococcus oceani (strain ATCC 19707 / BCRC 17464 / JCM 30415 / NCIMB 11848 / C-107)).